The primary structure comprises 211 residues: Probable septum site-determining protein MinC (211 aa).

It belongs to the MinC family. Interacts with MinD and FtsZ.

In terms of biological role, cell division inhibitor that blocks the formation of polar Z ring septums. Rapidly oscillates between the poles of the cell to destabilize FtsZ filaments that have formed before they mature into polar Z rings. Prevents FtsZ polymerization. The sequence is that of Probable septum site-determining protein MinC from Clostridium acetobutylicum (strain ATCC 824 / DSM 792 / JCM 1419 / IAM 19013 / LMG 5710 / NBRC 13948 / NRRL B-527 / VKM B-1787 / 2291 / W).